The primary structure comprises 550 residues: O-phosphoserine--tRNA(Cys) ligase (550 aa).

A disordered region spans residues 1-32 (MRFNPQDWKEKSHTNFEGAWHDGPSVITPPGE). Substrate contacts are provided by residues 212–214 (HMT), 257–259 (SAS), 299–300 (YY), and asparagine 342.

Belongs to the class-II aminoacyl-tRNA synthetase family. O-phosphoseryl-tRNA(Cys) synthetase subfamily. Homotetramer. Interacts with SepCysS.

The catalysed reaction is tRNA(Cys) + O-phospho-L-serine + ATP = O-phospho-L-seryl-tRNA(Cys) + AMP + diphosphate. Functionally, catalyzes the attachment of O-phosphoserine (Sep) to tRNA(Cys). The sequence is that of O-phosphoserine--tRNA(Cys) ligase from Methanoregula boonei (strain DSM 21154 / JCM 14090 / 6A8).